We begin with the raw amino-acid sequence, 369 residues long: S-adenosylmethionine:tRNA ribosyltransferase-isomerase (369 aa).

It belongs to the QueA family. Monomer.

The protein localises to the cytoplasm. The catalysed reaction is 7-aminomethyl-7-carbaguanosine(34) in tRNA + S-adenosyl-L-methionine = epoxyqueuosine(34) in tRNA + adenine + L-methionine + 2 H(+). It functions in the pathway tRNA modification; tRNA-queuosine biosynthesis. Functionally, transfers and isomerizes the ribose moiety from AdoMet to the 7-aminomethyl group of 7-deazaguanine (preQ1-tRNA) to give epoxyqueuosine (oQ-tRNA). This Acaryochloris marina (strain MBIC 11017) protein is S-adenosylmethionine:tRNA ribosyltransferase-isomerase.